We begin with the raw amino-acid sequence, 461 residues long: Sensor histidine kinase MctS (461 aa).

2 consecutive transmembrane segments (helical) span residues Ile-7 to Thr-27 and Phe-203 to Leu-223. At His-259 the chain carries Phosphohistidine; by autocatalysis. Positions Leu-360 to Ala-450 constitute a Histidine kinase domain.

The protein localises to the cell membrane. The enzyme catalyses ATP + protein L-histidine = ADP + protein N-phospho-L-histidine.. In terms of biological role, member of the two-component regulatory system MctS/MctR, which activates mctP expression. The protein is Sensor histidine kinase MctS of Rhizobium johnstonii (strain DSM 114642 / LMG 32736 / 3841) (Rhizobium leguminosarum bv. viciae).